The following is a 1160-amino-acid chain: MSEPRFVHLRVHSDYSMIDGLAKTAPLVKKAAALGMPALAITDFTNLCGLVKFYGAGHGAGIKPIVGADFNVQCDLLGDELTHLTVLAANNTGYQNLTLLISKAYQRGYGAAGPIIDRDWLIELNEGLILLSGGRMGDVGRSLLRGNSALVDECVAFYEEHFPDRYFLELIRTGRPDEESYLHAAVELAEARGLPVVATNDVRFIDSSDFDAHEIRVAIHDGFTLDDPKRPRNYSPQQYMRSEEEMCELFADIPEALANTVEIAKRCNVTVRLGEYFLPQFPTGDMSTEDYLVKRAKEGLEERLAFLFPDEEERVKRRPEYDERLETELQVINQMGFPGYFLIVMEFIQWSKDNGVPVGPGRGSGAGSLVAYALKITDLDPLEFDLLFERFLNPERVSMPDFDVDFCMEKRDQVIEHVADMYGRDAVSQIITFGTMAAKAVIRDVGRVLGHPYGFVDRISKLIPPDPGMTLAKAFEAEPQLPEIYEADEEVKALIDMARKLEGVTRNAGKHAGGVVIAPTKITDFAPLYCDEEGKHPVTQFDKSDVEYAGLVKFDFLGLRTLTIINWALEMINKRRAKNGEPPLDIAAIPLDDKKSFDMLQRSETTAVFQLESRGMKDLIKRLQPDCFEDMIALVALFRPGPLQSGMVDNFIDRKHGREEISYPDVQWQHESLKPVLEPTYGIILYQEQVMQIAQVLSGYTLGGADMLRRAMGKKKPEEMAKQRSVFAEGAEKNGINAELAMKIFDLVEKFAGYGFNKSHSAAYALVSYQTLWLKAHYPAEFMAAVMTADMDNTEKVVGLVDECWRMGLKILPPDINSGLYHFHVNDDGEIVYGIGAIKGVGEGPIEAIIEARNKGGYFRELFDLCARTDTKKLNRRVLEKLIMSGAFDRLGPHRAALMNSLGDALKAADQHAKAEAIGQADMFGVLAEEPEQIEQSYASCQPWPEQVVLDGERETLGLYLTGHPINQYLKEIERYVGGVRLKDMHPTERGKVITAAGLVVAARVMVTKRGNRIGICTLDDRSGRLEVMLFTDALDKYQHLLEKDRILIVSGQVSFDDFSGGLKMTAREVMDIDEAREKYARGLAISLTDRQIDDQLLNRLRQSLEPHRSGTIPVHLYYQRADARARLRFGATWRVSPSDRLLNDLRGLIGSEQVELEFD.

Belongs to the DNA polymerase type-C family. DnaE subfamily. The DNA polymerase holoenzyme is a complex that contains 10 different types of subunits. These subunits are organized into 3 functionally essential subassemblies: the pol III core, the beta sliding clamp processivity factor and the clamp-loading complex. The pol III core (subunits alpha,epsilon and theta) contains the polymerase and the 3'-5' exonuclease proofreading activities. The polymerase is tethered to the template via the sliding clamp processivity factor. The clamp-loading complex assembles the beta processivity factor onto the primer template and plays a central role in the organization and communication at the replication fork. This complex contains delta, delta', psi and chi, and copies of either or both of two different DnaX proteins, gamma and tau. The composition of the holoenzyme is, therefore: (alpha,epsilon,theta)[2]-(gamma/tau)[3]-delta,delta', psi,chi-beta[4].

It localises to the cytoplasm. It catalyses the reaction DNA(n) + a 2'-deoxyribonucleoside 5'-triphosphate = DNA(n+1) + diphosphate. Functionally, DNA polymerase III is a complex, multichain enzyme responsible for most of the replicative synthesis in bacteria. This DNA polymerase also exhibits 3' to 5' exonuclease activity. The alpha chain is the DNA polymerase. The sequence is that of DNA polymerase III subunit alpha (dnaE) from Escherichia coli O157:H7.